The chain runs to 31 residues: Photosystem I reaction center subunit XII (31 aa).

Residues 7-26 form a helical membrane-spanning segment; that stretch reads QVYIALLTALIPAFFALKLG.

Belongs to the PsaM family.

Its subcellular location is the plastid. It is found in the chloroplast thylakoid membrane. This chain is Photosystem I reaction center subunit XII, found in Euglena viridis (Cercaria viridis).